The primary structure comprises 414 residues: 3-oxoacyl-[acyl-carrier-protein] synthase 2 (414 aa).

In terms of domain architecture, Ketosynthase family 3 (KS3) spans 3-413 (KRRVVVTGMG…GTNGSLIFKR (411 aa)). Residues cysteine 164, histidine 304, and histidine 342 each act as for beta-ketoacyl synthase activity in the active site.

This sequence belongs to the thiolase-like superfamily. Beta-ketoacyl-ACP synthases family. Homodimer.

The enzyme catalyses a fatty acyl-[ACP] + malonyl-[ACP] + H(+) = a 3-oxoacyl-[ACP] + holo-[ACP] + CO2. The catalysed reaction is (9Z)-hexadecenoyl-[ACP] + malonyl-[ACP] + H(+) = 3-oxo-(11Z)-octadecenoyl-[ACP] + holo-[ACP] + CO2. It functions in the pathway lipid metabolism; fatty acid biosynthesis. Its function is as follows. Involved in the type II fatty acid elongation cycle. Catalyzes the elongation of a wide range of acyl-ACP by the addition of two carbons from malonyl-ACP to an acyl acceptor. Can efficiently catalyze the conversion of palmitoleoyl-ACP (cis-hexadec-9-enoyl-ACP) to cis-vaccenoyl-ACP (cis-octadec-11-enoyl-ACP), an essential step in the thermal regulation of fatty acid composition. In Vibrio cholerae serotype O1 (strain ATCC 39315 / El Tor Inaba N16961), this protein is 3-oxoacyl-[acyl-carrier-protein] synthase 2 (fabF).